A 2292-amino-acid chain; its full sequence is Protein Ycf2 (2292 aa).

1640–1647 (GSIGIGRS) contacts ATP.

This sequence belongs to the Ycf2 family.

It localises to the plastid. It is found in the chloroplast stroma. In terms of biological role, probable ATPase of unknown function. Its presence in a non-photosynthetic plant (Epifagus virginiana) and experiments in tobacco indicate that it has an essential function which is probably not related to photosynthesis. This is Protein Ycf2 from Liriodendron tulipifera (Tuliptree).